Consider the following 237-residue polypeptide: Putative N-acetylmuramoyl-L-alanine amidase (237 aa).

In terms of domain architecture, MurNAc-LAA spans 7–225; it reads ILIDAGHGGY…IANSIYLGLK (219 aa).

It belongs to the N-acetylmuramoyl-L-alanine amidase 3 family.

The protein localises to the secreted. The enzyme catalyses Hydrolyzes the link between N-acetylmuramoyl residues and L-amino acid residues in certain cell-wall glycopeptides.. In terms of biological role, cell-wall hydrolase involved in septum cleavage during cell division. This Buchnera aphidicola subsp. Acyrthosiphon pisum (strain APS) (Acyrthosiphon pisum symbiotic bacterium) protein is Putative N-acetylmuramoyl-L-alanine amidase (amiB).